We begin with the raw amino-acid sequence, 177 residues long: uncharacterized protein (177 aa).

This is an uncharacterized protein from Grapevine virus A (isolate Is 151) (GVA).